The following is a 54-amino-acid chain: Preprotein translocase subunit SecG (54 aa).

The Cytoplasmic segment spans residues 1-31 (MSSGSNSGGLMSSAGLVRYFDSEDRDAIAID). Residues 32–53 (PKTVLAFCVLFGVFVQILSLTV) traverse the membrane as a helical segment. Position 54 (A54) is a topological domain, extracellular.

It belongs to the SEC61-beta family. In terms of assembly, component of the protein translocase complex. Heterotrimer consisting of alpha (SecY), beta (SecG) and gamma (SecE) subunits. Can form oligomers of the heterotrimer.

Its subcellular location is the cell membrane. Its function is as follows. Involved in protein export. The function of the beta subunit is unknown, but it may be involved in stabilization of the trimeric complex. This is Preprotein translocase subunit SecG from Halorubrum lacusprofundi (strain ATCC 49239 / DSM 5036 / JCM 8891 / ACAM 34).